We begin with the raw amino-acid sequence, 461 residues long: MTGTKRNGEEVVNENNNNNVAEETNKKAKVDESSTETTESTSCSLLSRCEKLDIVRKELDVKPWDQGKVTIQELITSLLDKTDRDAFFVADVGVIIKQWQKWVKNLPNVKPYYAVKCNPTVGVLRVLDALGTNYDCASRTEIESVLNLGVDPSRIIYANPCKQISALKFARAHNVKLMTFDNLSELEKIEKFFPEAELVLRIAPDDSKSVMRFGSKFGVHIDDCNDLLEMAKEMNLKVVGVSFHVGSGCQSGDSYADALIMVKSVFDMAKKLNMELTLVDVGGGFTGSDDEKFNAFTKVIREKTAELFSPNVKIIAEPGRYFAAQSHTLAVTVISKRSIKQEDNRQHPRRTSNNMRQYNYYLADGVYGSFNNTKFDYAKVEPLLLKPSTKQPTPCTLFGPTCDSIDVVLKDTQIPELKIGDWLYFQDMGAYTIASSSSFNGFCPPPVYYYNSIPEEELKNL.

The interval 1–35 is disordered; that stretch reads MTGTKRNGEEVVNENNNNNVAEETNKKAKVDESST. Positions 13–22 are enriched in low complexity; sequence NENNNNNVAE. Residues 23 to 32 are compositionally biased toward basic and acidic residues; the sequence is ETNKKAKVDE. The residue at position 116 (Lys-116) is an N6-(pyridoxal phosphate)lysine. Residues Ser-247, Gly-284, and 317 to 320 contribute to the pyridoxal 5'-phosphate site; that span reads EPGR. A substrate-binding site is contributed by 375–376; sequence FD. The Proton donor; shared with dimeric partner role is filled by Cys-402. Asp-403 contributes to the substrate binding site. Pyridoxal 5'-phosphate is bound at residue Tyr-431.

This sequence belongs to the Orn/Lys/Arg decarboxylase class-II family. As to quaternary structure, homodimer. Only the dimer is catalytically active, as the active sites are constructed of residues from both monomers. The cofactor is pyridoxal 5'-phosphate.

The enzyme catalyses L-ornithine + H(+) = putrescine + CO2. Its pathway is amine and polyamine biosynthesis; putrescine biosynthesis via L-ornithine pathway; putrescine from L-ornithine: step 1/1. With respect to regulation, inhibited by antizyme (AZ) in response to polyamine levels. AZ inhibits the assembly of the functional homodimer by binding to ODC monomers and targeting them for ubiquitin-independent proteolytic destruction by the 26S proteasome. Catalyzes the first and rate-limiting step of polyamine biosynthesis that converts ornithine into putrescine, which is the precursor for the polyamines, spermidine and spermine. Polyamines are essential for cell proliferation and are implicated in cellular processes, ranging from DNA replication to apoptosis. The chain is Probable ornithine decarboxylase (odc) from Dictyostelium discoideum (Social amoeba).